The sequence spans 474 residues: Mitochondrial import inner membrane translocase subunit TIM44-1 (474 aa).

A mitochondrion-targeting transit peptide spans 1-54; it reads MAIRKIIRDLLITKQPLLRQLFHQRVLRANARSEFLPAIGYTSHRRFSVFTEFS. A coiled-coil region spans residues 68 to 88; that stretch reads ERTVKELKERTEEFKGVTEDL. Basic and acidic residues predominate over residues 132-143; that stretch reads VKESFKLGKEEN. Positions 132 to 165 are disordered; sequence VKESFKLGKEENAESASSSGTRASQGEKQQSGST. Polar residues predominate over residues 145–165; the sequence is ESASSSGTRASQGEKQQSGST.

Belongs to the Tim44 family. As to quaternary structure, probable component of the PAM complex at least composed of a mitochondrial HSP70 protein, TIMM44 and TIMM14. The complex interacts with the TIMM23 component of the TIM17:23 complex. As to expression, expressed in roots, flowers, young cotyledons and leaves.

It is found in the mitochondrion inner membrane. Its function is as follows. Essential component of the PAM complex, a complex required for the translocation of transit peptide-containing proteins from the inner membrane into the mitochondrial matrix in an ATP-dependent manner. Recruits mitochondrial HSP70 to drive protein translocation into the matrix using ATP as an energy source. In Arabidopsis thaliana (Mouse-ear cress), this protein is Mitochondrial import inner membrane translocase subunit TIM44-1 (TIM44-1).